A 155-amino-acid polypeptide reads, in one-letter code: Protein archease-like (155 aa).

Residues D26, D154, and I155 each coordinate Ca(2+).

It belongs to the archease family.

Functionally, component of the tRNA-splicing ligase complex required to facilitate the enzymatic turnover of catalytic subunit RtcB. The protein is Protein archease-like of Caenorhabditis briggsae.